The sequence spans 213 residues: MGLNLGVIDYGMGNLHSVGKALERLGEQAVLVQGPEDLKSVDALILPGVGSFDPAIENLRATGLIPHLKDWGNNNRPLLGICLGLQLLFERSDEGSKDGLGLFQGAVERLQSHPNERIPHMGWAPLTVERNCPLLHSDDPTPWVYFVHSYAAVPLNSSVLAATAAYGNAAVTAMVWSGRIGACQFHPEKSSAAGEAMLKRWLHWLHQGAEPVH.

The region spanning 4–211 (NLGVIDYGMG…LHWLHQGAEP (208 aa)) is the Glutamine amidotransferase type-1 domain. Cys-82 (nucleophile) is an active-site residue. Catalysis depends on residues His-186 and Glu-188.

In terms of assembly, heterodimer of HisH and HisF.

The protein resides in the cytoplasm. The catalysed reaction is 5-[(5-phospho-1-deoxy-D-ribulos-1-ylimino)methylamino]-1-(5-phospho-beta-D-ribosyl)imidazole-4-carboxamide + L-glutamine = D-erythro-1-(imidazol-4-yl)glycerol 3-phosphate + 5-amino-1-(5-phospho-beta-D-ribosyl)imidazole-4-carboxamide + L-glutamate + H(+). It carries out the reaction L-glutamine + H2O = L-glutamate + NH4(+). Its pathway is amino-acid biosynthesis; L-histidine biosynthesis; L-histidine from 5-phospho-alpha-D-ribose 1-diphosphate: step 5/9. Its function is as follows. IGPS catalyzes the conversion of PRFAR and glutamine to IGP, AICAR and glutamate. The HisH subunit catalyzes the hydrolysis of glutamine to glutamate and ammonia as part of the synthesis of IGP and AICAR. The resulting ammonia molecule is channeled to the active site of HisF. This Synechococcus sp. (strain CC9902) protein is Imidazole glycerol phosphate synthase subunit HisH.